The sequence spans 49 residues: Defensin Tm-AMP-D1.2 (49 aa).

Intrachain disulfides connect cysteine 3–cysteine 49, cysteine 14–cysteine 34, cysteine 20–cysteine 43, and cysteine 24–cysteine 45.

Its function is as follows. Plant defense peptide. The polypeptide is Defensin Tm-AMP-D1.2 (Triticum monococcum (Einkorn wheat)).